Reading from the N-terminus, the 1706-residue chain is Bifunctional hemolysin/adenylate cyclase (1706 aa).

Positions 1 to 399 (MQQSHQAGYA…RRPSLGAVER (399 aa)) are a, catalytic. 349 to 356 (AYGVAGKS) serves as a coordination point for ATP. The disordered stretch occupies residues 367–405 (GVPGGRSKSSPDVLETVPASPGLRRPSLGAVERQDSGYD). The interval 400–912 (QDSGYDSLDG…LKHSIKLEVI (513 aa)) is b, Ala/Gly-rich. The tract at residues 500–698 (LSAAVFGLGE…SVVGAPVAVV (199 aa)) is required for interaction with CyaC. Residues Lys-860 and Lys-983 are each lipidated (N6-palmitoyl lysine). The c stretch occupies residues 913–1656 (GGDGDDVVLA…RDADHRVEAI (744 aa)). Hemolysin-type calcium-binding repeat units follow at residues 1014–1031 (IGGAGNDSITGNAHDNFL), 1032–1049 (AGGAGDDRLDGGAGNDTL), 1050–1067 (VGGEGHNTVVGGAGDDVF), 1155–1172 (WGDDGNDTIHGRGGDDIL), 1173–1190 (RGGLGLDTLYGEDGNDIF), 1279–1296 (MGQGGDDTVRGGDGDDLL), 1297–1314 (FGGDGNDMLYGDAGNDTL), 1315–1332 (YGGLGDDTLEGGAGNDWF), 1335–1352 (TPAREHDVLRGGAGVDTV), 1411–1428 (TGDAQANVLRGAGGADVL), 1429–1446 (AGGEGDDVLLGGDGDDQL), 1447–1464 (SGDAGRDRLYGEAGDDWF), 1468–1484 (AANAGNLLDGGDGNDTV), 1537–1554 (IGDAGANVLNGLAGNDVL), 1555–1572 (SGGAGDDVLLGDEGSDLL), 1573–1590 (SGDAGNDDLFGGQGDDTY), and 1603–1620 (ESGGGHDTIRINAGADQL). The segment at 1657–1706 (HAANQAIDPAGIEKLVEAMAQYPDPGAAAAAPPAARVPDTLMQSLAVNWR) is d, Asp/Gly-rich.

The protein in the N-terminal section; belongs to the adenylyl cyclase class-2 family. In the C-terminal section; belongs to the RTX prokaryotic toxin family. In terms of processing, released in a processed form. Palmitoylated at Lys-860 and Lys-983 by CyaC. The toxin only becomes active when modified in position Lys-983: palmitoylation is required for efficient membrane insertion and pore formation of the acylated Hemolysin chain.

Its subcellular location is the secreted. The protein resides in the host cell membrane. The catalysed reaction is ATP = 3',5'-cyclic AMP + diphosphate. Its activity is regulated as follows. Activated by host calmodulin. Its function is as follows. Bifunctional adenylate cyclase toxin-hemolysin that plays a crucial role in host colonization. It causes whooping cough by acting on mammalian cells by elevating cAMP-concentration and thus disrupts normal cell function. In terms of biological role, adenylate cyclase that is activated by host intracellular calmodulin and catalyzes un-regulated conversion of ATP to cAMP, thereby impairing microbicidal functions of immune effector cells and inducing apoptosis of lung macrophages. Hemolysin that forms small cation-selective membrane channels, leading to hemolytic activity. The hemolytic activity of CyaA is weak compared with that of the HlyA of E.coli. The polypeptide is Bifunctional hemolysin/adenylate cyclase (cya) (Bordetella bronchiseptica (strain ATCC BAA-588 / NCTC 13252 / RB50) (Alcaligenes bronchisepticus)).